A 118-amino-acid chain; its full sequence is Large ribosomal subunit protein bL17 (118 aa).

This sequence belongs to the bacterial ribosomal protein bL17 family. As to quaternary structure, part of the 50S ribosomal subunit. Contacts protein L32.

The polypeptide is Large ribosomal subunit protein bL17 (Hydrogenobaculum sp. (strain Y04AAS1)).